The sequence spans 271 residues: Formamidopyrimidine-DNA glycosylase (271 aa).

Pro2 (schiff-base intermediate with DNA) is an active-site residue. Glu3 acts as the Proton donor in catalysis. The active-site Proton donor; for beta-elimination activity is the Lys56. His89, Arg107, and Arg151 together coordinate DNA. The segment at 236-270 (MVYDRAGLPCRVCAAPIKSIRQGQRSSFYCATCQK) adopts an FPG-type zinc-finger fold. Arg260 serves as the catalytic Proton donor; for delta-elimination activity.

This sequence belongs to the FPG family. In terms of assembly, monomer. It depends on Zn(2+) as a cofactor.

The enzyme catalyses Hydrolysis of DNA containing ring-opened 7-methylguanine residues, releasing 2,6-diamino-4-hydroxy-5-(N-methyl)formamidopyrimidine.. The catalysed reaction is 2'-deoxyribonucleotide-(2'-deoxyribose 5'-phosphate)-2'-deoxyribonucleotide-DNA = a 3'-end 2'-deoxyribonucleotide-(2,3-dehydro-2,3-deoxyribose 5'-phosphate)-DNA + a 5'-end 5'-phospho-2'-deoxyribonucleoside-DNA + H(+). Involved in base excision repair of DNA damaged by oxidation or by mutagenic agents. Acts as a DNA glycosylase that recognizes and removes damaged bases. Has a preference for oxidized purines, such as 7,8-dihydro-8-oxoguanine (8-oxoG). Has AP (apurinic/apyrimidinic) lyase activity and introduces nicks in the DNA strand. Cleaves the DNA backbone by beta-delta elimination to generate a single-strand break at the site of the removed base with both 3'- and 5'-phosphates. In Polaromonas naphthalenivorans (strain CJ2), this protein is Formamidopyrimidine-DNA glycosylase.